The following is a 459-amino-acid chain: Mitochondrial distribution and morphology protein 34 (459 aa).

One can recognise an SMP-LTD domain in the interval 1 to 190; the sequence is MSFRFNEAVF…LPSLIFNTSQ (190 aa). Over residues 338 to 347 the composition is skewed to basic and acidic residues; it reads RSNSNDDNAK. The tract at residues 338–375 is disordered; the sequence is RSNSNDDNAKPRRRKIKCKKTRTPSNLQSQGEQAVDDS. The segment covering 348–359 has biased composition (basic residues); the sequence is PRRRKIKCKKTR.

The protein belongs to the MDM34 family. In terms of assembly, component of the ER-mitochondria encounter structure (ERMES) or MDM complex, composed of MMM1, MDM10, MDM12 and MDM34. In terms of processing, ubiquitinated by a SCF (SKP1-CUL1-F-box protein) E3 ubiquitin-protein ligase complex containing the F-box protein MDM30. Ubiquitination is important for mitochondrial integrity.

It localises to the mitochondrion outer membrane. Component of the ERMES/MDM complex, which serves as a molecular tether to connect the endoplasmic reticulum (ER) and mitochondria. Components of this complex are involved in the control of mitochondrial shape and protein biogenesis, and function in nonvesicular lipid trafficking between the ER and mitochondria. MDM34 is required for the interaction of the ER-resident membrane protein MMM1 and the outer mitochondrial membrane-resident beta-barrel protein MDM10. The polypeptide is Mitochondrial distribution and morphology protein 34 (Saccharomyces cerevisiae (strain YJM789) (Baker's yeast)).